Here is a 92-residue protein sequence, read N- to C-terminus: UPF0223 protein EF_2462 (92 aa).

Belongs to the UPF0223 family.

This Enterococcus faecalis (strain ATCC 700802 / V583) protein is UPF0223 protein EF_2462.